Reading from the N-terminus, the 110-residue chain is Nitrogenase-stabilizing/protective protein NifW (110 aa).

The protein belongs to the NifW family. In terms of assembly, homotrimer; associates with NifD.

May protect the nitrogenase Fe-Mo protein from oxidative damage. This Acidithiobacillus ferrooxidans (strain ATCC 23270 / DSM 14882 / CIP 104768 / NCIMB 8455) (Ferrobacillus ferrooxidans (strain ATCC 23270)) protein is Nitrogenase-stabilizing/protective protein NifW.